A 1098-amino-acid chain; its full sequence is Probable arabinosyltransferase B (1098 aa).

A run of 12 helical transmembrane segments spans residues 28–50 (WVAT…LPVV), 217–239 (LKLL…LWRL), 271–293 (ASWR…WHVI), 402–419 (LRPE…YVLI), 434–456 (AVVT…AALV), 472–494 (LVGT…TVVF), 541–558 (FGFL…FIML), 570–587 (PAWR…FLMF), 597–619 (GLFA…PSVL), 626–648 (MAFL…GWWY), 663–685 (IDGI…YAAW), and 698–720 (LIRA…VFVA).

Belongs to the emb family.

Its subcellular location is the cell membrane. Its function is as follows. Arabinosyl transferase responsible for the polymerization of arabinose into the arabinan of arabinogalactan. This Mycobacterium tuberculosis (strain CDC 1551 / Oshkosh) protein is Probable arabinosyltransferase B (embB).